A 138-amino-acid chain; its full sequence is Acidic phospholipase A2 CH-E6' (138 aa).

A signal peptide spans 1 to 16 (MRTLWIVAVLLLGVEG). 7 disulfides stabilise this stretch: C42-C131, C44-C60, C59-C111, C65-C138, C66-C104, C73-C97, and C91-C102. 3 residues coordinate Ca(2+): Y43, G45, and G47. H63 is an active-site residue. A Ca(2+)-binding site is contributed by D64. Residue D105 is part of the active site.

It belongs to the phospholipase A2 family. Group II subfamily. D49 sub-subfamily. Ca(2+) is required as a cofactor. As to expression, expressed by the venom gland.

The protein resides in the secreted. It catalyses the reaction a 1,2-diacyl-sn-glycero-3-phosphocholine + H2O = a 1-acyl-sn-glycero-3-phosphocholine + a fatty acid + H(+). Its function is as follows. Snake venom phospholipase A2 (PLA2) that shows high lipolytic and weak ADP-induced platelet aggregation activities. Also shows weak anticoagulant activity. PLA2 catalyzes the calcium-dependent hydrolysis of the 2-acyl groups in 3-sn-phosphoglycerides. In Crotalus horridus (Timber rattlesnake), this protein is Acidic phospholipase A2 CH-E6'.